The following is a 316-amino-acid chain: Phospholipase A1 3 (316 aa).

The first 4 residues, 1–4, serve as a signal peptide directing secretion; it reads ADDL. A propeptide spanning residues 5 to 14 is cleaved from the precursor; the sequence is TTLRNGTLDR. Cysteines 20 and 103 form a disulfide. Ser-153 (nucleophile) is an active-site residue. The active-site Charge relay system is Asp-181. Intrachain disulfides connect Cys-192-Cys-197 and Cys-235-Cys-240. The active-site Charge relay system is the His-242. Cystine bridges form between Cys-257/Cys-284, Cys-258/Cys-309, and Cys-277/Cys-282.

The protein belongs to the AB hydrolase superfamily. Lipase family. In terms of tissue distribution, expressed by the venom gland.

Its subcellular location is the secreted. The enzyme catalyses a 1,2-diacyl-sn-glycero-3-phosphocholine + H2O = a 2-acyl-sn-glycero-3-phosphocholine + a fatty acid + H(+). Catalyzes the hydrolysis of phosphatidylcholine with phospholipase A1 activity. May act as an allergen and induce hemolytic activity. This chain is Phospholipase A1 3, found in Polistes dominula (European paper wasp).